Consider the following 286-residue polypeptide: Translocon-associated protein subunit alpha (286 aa).

The N-terminal stretch at 1–20 is a signal peptide; it reads MSSLRRLLLLLLLVFPATLL. Topologically, residues 21 to 207 are lumenal; it reads LRVGPGGSLA…EREDGLDGET (187 aa). Residues 37-75 show a composition bias toward acidic residues; sequence EDEETVEDSIIEDEDDEAEVEEDEPTDLAEDKEEDDVSG. Positions 37–83 are disordered; the sequence is EDEETVEDSIIEDEDDEAEVEEDEPTDLAEDKEEDDVSGEPEASPSA. N-linked (GlcNAc...) asparagine glycosylation is found at Asn136 and Asn191. Residues 208 to 228 traverse the membrane as a helical segment; the sequence is IFMYMFLAGLGLLVVVGLHQL. Topologically, residues 229-286 are cytoplasmic; sequence LESRKRKRPIQKVEMGTSSQNDVDMSWIPQETLNQINKASPRRLPRKRAQKRSVGSDE. At Ser247 the chain carries Phosphoserine. Position 260 is a phosphothreonine (Thr260). The disordered stretch occupies residues 261 to 286; the sequence is LNQINKASPRRLPRKRAQKRSVGSDE. Residue Ser268 is modified to Phosphoserine. Basic residues predominate over residues 268-279; it reads SPRRLPRKRAQK.

This sequence belongs to the TRAP-alpha family. Heterotetramer of TRAP-alpha, TRAP-beta, TRAP-delta and TRAP-gamma. Interacts with palmitoylated calnexin (CALX), the interaction is required for efficient folding of glycosylated proteins. Phosphorylated in its cytoplasmic tail.

The protein localises to the endoplasmic reticulum membrane. Functionally, TRAP proteins are part of a complex whose function is to bind calcium to the ER membrane and thereby regulate the retention of ER resident proteins. May be involved in the recycling of the translocation apparatus after completion of the translocation process or may function as a membrane-bound chaperone facilitating folding of translocated proteins. The sequence is that of Translocon-associated protein subunit alpha (SSR1) from Bos taurus (Bovine).